The following is a 257-amino-acid chain: Alkaline phosphatase synthesis transcriptional regulatory protein SphR (257 aa).

The Response regulatory domain occupies 25–148 (RILVVEDEAV…ELVARCRALL (124 aa)). Aspartate 83 is subject to 4-aspartylphosphate. Positions 159-257 (PAVLRYEGLK…TVRGFGYRLG (99 aa)) form a DNA-binding region, ompR/PhoB-type.

Phosphorylated by SphS.

Functionally, member of the two-component regulatory system SphR/SphS. Response regulator. Involved in inducible production of alkaline phosphatase in response to phosphate limitation as it is directly involved in the regulation of phoA transcription in response to phosphate limitation. Binds to two distinct sites upstream from the phoA promoter. The chain is Alkaline phosphatase synthesis transcriptional regulatory protein SphR (sphR) from Synechococcus elongatus (strain ATCC 33912 / PCC 7942 / FACHB-805) (Anacystis nidulans R2).